The following is a 343-amino-acid chain: Phosphate acyltransferase (343 aa).

Belongs to the PlsX family. Homodimer. Probably interacts with PlsY.

It is found in the cytoplasm. The catalysed reaction is a fatty acyl-[ACP] + phosphate = an acyl phosphate + holo-[ACP]. The protein operates within lipid metabolism; phospholipid metabolism. Functionally, catalyzes the reversible formation of acyl-phosphate (acyl-PO(4)) from acyl-[acyl-carrier-protein] (acyl-ACP). This enzyme utilizes acyl-ACP as fatty acyl donor, but not acyl-CoA. The polypeptide is Phosphate acyltransferase (Coxiella burnetii (strain RSA 331 / Henzerling II)).